The chain runs to 232 residues: Sugar fermentation stimulation protein homolog (232 aa).

This sequence belongs to the SfsA family.

This chain is Sugar fermentation stimulation protein homolog, found in Pyrobaculum arsenaticum (strain DSM 13514 / JCM 11321 / PZ6).